We begin with the raw amino-acid sequence, 201 residues long: Cerebellin-4 (201 aa).

The N-terminal stretch at 1–27 is a signal peptide; it reads MGSGRRALSAVPAVLLVLTLPGLPVWA. Asn-29 and Asn-88 each carry an N-linked (GlcNAc...) asparagine glycan. The 136-residue stretch at 66 to 201 folds into the C1q domain; it reads AANSKVAFSA…TFSGFLVFPL (136 aa).

Homohexamer; disulfide-linked homotrimers. The trimers are assembled via the globular C1q domains. The trimers associate via N-terminal cysteine residues to form disulfide-linked hexamers. May form oligomers with CBLN1, CBLN2 and CBLN3 prior to secretion. Strongly interacts with DCC in a NTN1-displaceable fashion. Weakly binds to NRXN1 and NRXN2 long and short isoforms produced by alternative promoter usage. Interaction with NRXN3 short isoform is hardly detectable; no interaction at all with NRXN3 long isoform. Sialoglycoprotein.

It localises to the secreted. The protein localises to the synapse. Functionally, acts as a synaptic organizer in specific subsets of neurons in the brain. Essential for the formation and maintenance of inhibitory GABAergic synapses. Promotes the development of dendrite-targeting inhibitory GABAergic synapses made by somatostatin-positive interneurons. May contribute to the function of ventral medial habenula region of the brain implicated in the regulation of anxiety-related behaviors. May play a role in CBLN3 export from the endoplasmic reticulum and secretion. The chain is Cerebellin-4 (CBLN4) from Homo sapiens (Human).